We begin with the raw amino-acid sequence, 442 residues long: Tyrosine-protein kinase transforming protein RYK (442 aa).

One can recognise a Protein kinase domain in the interval 45 to 316; the sequence is LSLGKVLGEG…QLKVHLEKLL (272 aa). ATP is bound by residues 51–59 and K77; that span reads LGEGEFGSV. D181 (proton acceptor) is an active-site residue. Y212 carries the post-translational modification Phosphotyrosine; by autocatalysis.

This sequence belongs to the protein kinase superfamily. Tyr protein kinase family. AXL/UFO subfamily.

It localises to the host cell membrane. The catalysed reaction is L-tyrosyl-[protein] + ATP = O-phospho-L-tyrosyl-[protein] + ADP + H(+). The chain is Tyrosine-protein kinase transforming protein RYK (V-RYK) from Avian retrovirus RPL30.